A 342-amino-acid polypeptide reads, in one-letter code: Probable transposase for insertion-like sequence element IS1161 (342 aa).

Positions 182-342 (IEERPEEINN…KKLFELTQTA (161 aa)) constitute an Integrase catalytic domain.

The protein belongs to the transposase IS30 family.

Required for the transposition of the insertion element. The protein is Probable transposase for insertion-like sequence element IS1161 of Streptococcus salivarius.